We begin with the raw amino-acid sequence, 315 residues long: Methionyl-tRNA formyltransferase (315 aa).

(6S)-5,6,7,8-tetrahydrofolate is bound at residue 113–116 (SLLP).

This sequence belongs to the Fmt family.

It catalyses the reaction L-methionyl-tRNA(fMet) + (6R)-10-formyltetrahydrofolate = N-formyl-L-methionyl-tRNA(fMet) + (6S)-5,6,7,8-tetrahydrofolate + H(+). Attaches a formyl group to the free amino group of methionyl-tRNA(fMet). The formyl group appears to play a dual role in the initiator identity of N-formylmethionyl-tRNA by promoting its recognition by IF2 and preventing the misappropriation of this tRNA by the elongation apparatus. This Escherichia coli (strain SMS-3-5 / SECEC) protein is Methionyl-tRNA formyltransferase.